Here is a 125-residue protein sequence, read N- to C-terminus: Fluoride-specific ion channel FluC (125 aa).

4 helical membrane passes run 1-21, 32-52, 68-88, and 101-121; these read MIQA…RYFV, AFPW…GVFA, LLIT…LDAI, and IYIA…LAIM. The Na(+) site is built by Gly-75 and Thr-78.

This sequence belongs to the fluoride channel Fluc/FEX (TC 1.A.43) family.

It localises to the cell inner membrane. It carries out the reaction fluoride(in) = fluoride(out). With respect to regulation, na(+) is not transported, but it plays an essential structural role and its presence is essential for fluoride channel function. Its function is as follows. Fluoride-specific ion channel. Important for reducing fluoride concentration in the cell, thus reducing its toxicity. This chain is Fluoride-specific ion channel FluC, found in Rhizobium etli (strain ATCC 51251 / DSM 11541 / JCM 21823 / NBRC 15573 / CFN 42).